A 290-amino-acid polypeptide reads, in one-letter code: Bifunctional protein FolD (290 aa).

NADP(+) contacts are provided by residues G169 to S171, I194, and I235.

It belongs to the tetrahydrofolate dehydrogenase/cyclohydrolase family. As to quaternary structure, homodimer.

It catalyses the reaction (6R)-5,10-methylene-5,6,7,8-tetrahydrofolate + NADP(+) = (6R)-5,10-methenyltetrahydrofolate + NADPH. The catalysed reaction is (6R)-5,10-methenyltetrahydrofolate + H2O = (6R)-10-formyltetrahydrofolate + H(+). It participates in one-carbon metabolism; tetrahydrofolate interconversion. Its function is as follows. Catalyzes the oxidation of 5,10-methylenetetrahydrofolate to 5,10-methenyltetrahydrofolate and then the hydrolysis of 5,10-methenyltetrahydrofolate to 10-formyltetrahydrofolate. The protein is Bifunctional protein FolD of Helicobacter pylori (strain J99 / ATCC 700824) (Campylobacter pylori J99).